The primary structure comprises 295 residues: Probable intramembrane protease C25B8.17 (295 aa).

A helical transmembrane segment spans residues 1–21 (MEGVILASSALFTVYIGAKWS). At 22–35 (AQEEEPEEKQLINK) the chain is on the cytoplasmic side. Residues 36 to 56 (RLAVLFPIFGGVTLVLMYLAL) traverse the membrane as a helical segment. Residues 57–63 (RYLSKEY) lie on the Lumenal side of the membrane. A helical membrane pass occupies residues 64–84 (IQLILQGYASLASIICFVRSF). Topologically, residues 85–89 (NPKTT) are cytoplasmic. The helical transmembrane segment at 90–106 (FGKITATMSSIAIALFY) threads the bilayer. Residues 107–111 (FKTKH) lie on the Lumenal side of the membrane. Residues 112-130 (WMASNILAWALAANSISIM) form a helical membrane-spanning segment. The Cytoplasmic segment spans residues 131–139 (RIDSYNTGA). Residues 140 to 160 (LLLGALFFYDIYFVFGTEVMV) traverse the membrane as a helical segment. The active site involves aspartate 149. Residues 161–183 (TVATGIDIPAKYVLPQFKNPTRL) lie on the Lumenal side of the membrane. A helical membrane pass occupies residues 184-204 (SMLGLGDIVMPGLMLALMYRF). Aspartate 190 is a catalytic residue. Residues 205 to 221 (DLHYYINSTSQPKKHST) lie on the Cytoplasmic side of the membrane. The helical transmembrane segment at 222–244 (YFRNTFIAYGLGLGVTNFALYYF) threads the bilayer. The Lumenal segment spans residues 245 to 249 (KAAQP). A PAL motif is present at residues 249-251 (PAL). Residues 250–268 (ALLYLSPACIVAPLLTAWY) traverse the membrane as a helical segment. The Cytoplasmic segment spans residues 269–295 (RDELKTLFSFRSETEDETDEQDKCKST).

Belongs to the peptidase A22B family.

It localises to the endoplasmic reticulum membrane. It is found in the golgi apparatus membrane. In Schizosaccharomyces pombe (strain 972 / ATCC 24843) (Fission yeast), this protein is Probable intramembrane protease C25B8.17.